A 110-amino-acid chain; its full sequence is Single-stranded DNA-binding protein 1 (110 aa).

Positions 1-104 (MNKILLIGRM…VVGEEVQFLE (104 aa)) constitute an SSB domain.

In terms of assembly, homotetramer.

The chain is Single-stranded DNA-binding protein 1 (ssb1) from Clostridium acetobutylicum (strain ATCC 824 / DSM 792 / JCM 1419 / IAM 19013 / LMG 5710 / NBRC 13948 / NRRL B-527 / VKM B-1787 / 2291 / W).